Consider the following 495-residue polypeptide: UDP-N-acetylmuramoyl-L-alanyl-D-glutamate--2,6-diaminopimelate ligase (495 aa).

UDP-N-acetyl-alpha-D-muramoyl-L-alanyl-D-glutamate is bound by residues Leu-27, Ser-29, and 44–46; that span reads HQA. 116 to 122 lines the ATP pocket; it reads GTNGKTT. UDP-N-acetyl-alpha-D-muramoyl-L-alanyl-D-glutamate-binding positions include Asn-157, 158 to 159, Ser-185, Gln-191, and Arg-193; that span reads TT. Lys-225 bears the N6-carboxylysine mark. Meso-2,6-diaminopimelate contacts are provided by residues Arg-390, 414 to 417, Gly-465, and Glu-469; that span reads DNPR. Positions 414–417 match the Meso-diaminopimelate recognition motif motif; that stretch reads DNPR.

It belongs to the MurCDEF family. MurE subfamily. Mg(2+) is required as a cofactor. Carboxylation is probably crucial for Mg(2+) binding and, consequently, for the gamma-phosphate positioning of ATP.

The protein localises to the cytoplasm. It catalyses the reaction UDP-N-acetyl-alpha-D-muramoyl-L-alanyl-D-glutamate + meso-2,6-diaminopimelate + ATP = UDP-N-acetyl-alpha-D-muramoyl-L-alanyl-gamma-D-glutamyl-meso-2,6-diaminopimelate + ADP + phosphate + H(+). It participates in cell wall biogenesis; peptidoglycan biosynthesis. Its function is as follows. Catalyzes the addition of meso-diaminopimelic acid to the nucleotide precursor UDP-N-acetylmuramoyl-L-alanyl-D-glutamate (UMAG) in the biosynthesis of bacterial cell-wall peptidoglycan. This is UDP-N-acetylmuramoyl-L-alanyl-D-glutamate--2,6-diaminopimelate ligase from Escherichia coli O6:H1 (strain CFT073 / ATCC 700928 / UPEC).